The sequence spans 86 residues: Small ribosomal subunit protein eS27y (86 aa).

A C4-type zinc finger spans residues 39–61; that stretch reads CQGCFNITTVFSHSQTVVVCGNC.

The protein belongs to the eukaryotic ribosomal protein eS27 family. Zn(2+) serves as cofactor.

Functionally, may be involved in the elimination of damaged mRNA after UV irradiation. This is Small ribosomal subunit protein eS27y (RPS27B) from Arabidopsis thaliana (Mouse-ear cress).